Consider the following 458-residue polypeptide: D-inositol 3-phosphate glycosyltransferase (458 aa).

His16 provides a ligand contact to 1D-myo-inositol 3-phosphate. UDP-N-acetyl-alpha-D-glucosamine is bound by residues 22 to 23 (QP) and Gly30. Residues 27-32 (DAGGMN), Lys85, Tyr118, Thr142, and Arg162 each bind 1D-myo-inositol 3-phosphate. The UDP-N-acetyl-alpha-D-glucosamine site is built by Arg236, Lys241, and Gln302. The Mg(2+) site is built by Tyr311, Arg312, and Ser314. Positions 324 and 332 each coordinate UDP-N-acetyl-alpha-D-glucosamine. Thr338 is a binding site for Mg(2+). Residues 428–458 (VAAQNVTGSSSRTRRPWRRRRSTLLPMTGRS) are disordered. Over residues 439–449 (RTRRPWRRRRS) the composition is skewed to basic residues.

Belongs to the glycosyltransferase group 1 family. MshA subfamily. In terms of assembly, homodimer.

It catalyses the reaction 1D-myo-inositol 3-phosphate + UDP-N-acetyl-alpha-D-glucosamine = 1D-myo-inositol 2-acetamido-2-deoxy-alpha-D-glucopyranoside 3-phosphate + UDP + H(+). Catalyzes the transfer of a N-acetyl-glucosamine moiety to 1D-myo-inositol 3-phosphate to produce 1D-myo-inositol 2-acetamido-2-deoxy-glucopyranoside 3-phosphate in the mycothiol biosynthesis pathway. The chain is D-inositol 3-phosphate glycosyltransferase from Gordonia bronchialis (strain ATCC 25592 / DSM 43247 / BCRC 13721 / JCM 3198 / KCTC 3076 / NBRC 16047 / NCTC 10667) (Rhodococcus bronchialis).